Consider the following 820-residue polypeptide: Cation/H(+) antiporter 17 (820 aa).

12 helical membrane-spanning segments follow: residues 30 to 50 (LPLL…LAFL), 58 to 75 (RVIA…SALG), 90 to 110 (LTVL…LVGL), 124 to 144 (ALSI…GTSF), 159 to 179 (FLVF…ARIL), 192 to 212 (IALS…ALAV), 222 to 242 (LTSL…IFVV), 276 to 296 (FVTD…GVIF), 313 to 333 (LVSG…TNVA), 342 to 362 (GLLV…TVLV), 374 to 394 (LALG…LNIG), and 404 to 424 (IFAI…PLVL). Phosphoserine occurs at positions 817 and 819.

Belongs to the monovalent cation:proton antiporter 2 (CPA2) transporter (TC 2.A.37) family. CHX (TC 2.A.37.4) subfamily. In terms of tissue distribution, predominantly expressed in epidermal and cortical cells of mature roots but also barely detected in leaves.

The protein resides in the membrane. In terms of biological role, operates as a K(+)/H(+) antiporter that controls K(+) acquisition and homeostasis. The polypeptide is Cation/H(+) antiporter 17 (CHX17) (Arabidopsis thaliana (Mouse-ear cress)).